The primary structure comprises 114 residues: T cell receptor beta variable 10-2 (114 aa).

Positions 1–21 (MGTRLFFYVALCLLWAGHRDA) are cleaved as a signal peptide. Positions 22-114 (GITQSPRYKI…TSVYFCASSE (93 aa)) constitute an Ig-like domain. Cysteine 42 and cysteine 110 are disulfide-bonded.

As to quaternary structure, alpha-beta TR is a heterodimer composed of an alpha and beta chain; disulfide-linked. The alpha-beta TR is associated with the transmembrane signaling CD3 coreceptor proteins to form the TR-CD3 (TcR or TCR). The assembly of alpha-beta TR heterodimers with CD3 occurs in the endoplasmic reticulum where a single alpha-beta TR heterodimer associates with one CD3D-CD3E heterodimer, one CD3G-CD3E heterodimer and one CD247 homodimer forming a stable octameric structure. CD3D-CD3E and CD3G-CD3E heterodimers preferentially associate with TR alpha and TR beta chains, respectively. The association of the CD247 homodimer is the last step of TcR assembly in the endoplasmic reticulum and is required for transport to the cell surface.

Its subcellular location is the cell membrane. Its function is as follows. V region of the variable domain of T cell receptor (TR) beta chain that participates in the antigen recognition. Alpha-beta T cell receptors are antigen specific receptors which are essential to the immune response and are present on the cell surface of T lymphocytes. Recognize peptide-major histocompatibility (MH) (pMH) complexes that are displayed by antigen presenting cells (APC), a prerequisite for efficient T cell adaptive immunity against pathogens. Binding of alpha-beta TR to pMH complex initiates TR-CD3 clustering on the cell surface and intracellular activation of LCK that phosphorylates the ITAM motifs of CD3G, CD3D, CD3E and CD247 enabling the recruitment of ZAP70. In turn ZAP70 phosphorylates LAT, which recruits numerous signaling molecules to form the LAT signalosome. The LAT signalosome propagates signal branching to three major signaling pathways, the calcium, the mitogen-activated protein kinase (MAPK) kinase and the nuclear factor NF-kappa-B (NF-kB) pathways, leading to the mobilization of transcription factors that are critical for gene expression and essential for T cell growth and differentiation. The T cell repertoire is generated in the thymus, by V-(D)-J rearrangement. This repertoire is then shaped by intrathymic selection events to generate a peripheral T cell pool of self-MH restricted, non-autoaggressive T cells. Post-thymic interaction of alpha-beta TR with the pMH complexes shapes TR structural and functional avidity. The sequence is that of T cell receptor beta variable 10-2 from Homo sapiens (Human).